Consider the following 408-residue polypeptide: Serine/threonine transporter SstT (408 aa).

Transmembrane regions (helical) follow at residues 11 to 31 (LANG…VSLA), 43 to 63 (FLGS…VFIL), 82 to 102 (IVVL…VLSM), 141 to 161 (ALMT…GLAL), 192 to 212 (IGIF…AIAG), 216 to 236 (LLAV…PLIV), 290 to 310 (IPLG…VLTL), 316 to 336 (LGIQ…AISA), and 363 to 383 (VAMQ…AAET).

Belongs to the dicarboxylate/amino acid:cation symporter (DAACS) (TC 2.A.23) family.

It is found in the cell inner membrane. The catalysed reaction is L-serine(in) + Na(+)(in) = L-serine(out) + Na(+)(out). It carries out the reaction L-threonine(in) + Na(+)(in) = L-threonine(out) + Na(+)(out). Functionally, involved in the import of serine and threonine into the cell, with the concomitant import of sodium (symport system). This chain is Serine/threonine transporter SstT, found in Shewanella sp. (strain ANA-3).